The primary structure comprises 167 residues: MDKLTIISGCLFLAADIFAIASIANPDWINTGESAGALTVGLVRQCQTIHGRDRTCIPPRLPPEWVTTLFFIIMGIISLTVTCGLLVASHWRREATKYARWIAFTGMILFCMAALIFPIGFYINEVGGQPYKLPNNTVVGSSYVLFVLSIFFTIVGLLFAGKVCLPG.

This is an uncharacterized protein from Xenopus laevis (African clawed frog).